The following is a 941-amino-acid chain: Isoleucine--tRNA ligase (941 aa).

The short motif at 58-68 is the 'HIGH' region element; sequence PYANGDIHIGH. E563 is an L-isoleucyl-5'-AMP binding site. The 'KMSKS' region signature appears at 604-608; sequence KMSKS. Position 607 (K607) interacts with ATP. Residues C904, C907, C924, and C927 each contribute to the Zn(2+) site.

This sequence belongs to the class-I aminoacyl-tRNA synthetase family. IleS type 1 subfamily. Monomer. Zn(2+) serves as cofactor.

It is found in the cytoplasm. The enzyme catalyses tRNA(Ile) + L-isoleucine + ATP = L-isoleucyl-tRNA(Ile) + AMP + diphosphate. Functionally, catalyzes the attachment of isoleucine to tRNA(Ile). As IleRS can inadvertently accommodate and process structurally similar amino acids such as valine, to avoid such errors it has two additional distinct tRNA(Ile)-dependent editing activities. One activity is designated as 'pretransfer' editing and involves the hydrolysis of activated Val-AMP. The other activity is designated 'posttransfer' editing and involves deacylation of mischarged Val-tRNA(Ile). The chain is Isoleucine--tRNA ligase from Halorhodospira halophila (strain DSM 244 / SL1) (Ectothiorhodospira halophila (strain DSM 244 / SL1)).